We begin with the raw amino-acid sequence, 101 residues long: Isochorismate pyruvate lyase (101 aa).

A Chorismate mutase domain is found at P4 to W94. Substrate contacts are provided by R14, R31, K42, and Q90.

Dimer of dimers.

It catalyses the reaction isochorismate = salicylate + pyruvate. It carries out the reaction chorismate = prephenate. Its pathway is siderophore biosynthesis; salicylate biosynthesis. Inhibited by endo-oxabicyclic diacid resembling to the conformation of the transition state. In terms of biological role, involved in the incorporation of salicylate into the siderophore pyochelin. Catalyzes the elimination of the enolpyruvyl side chain from isochorismate to yield salicylate and pyruvate via a rare pericyclic hydrogen transfer mechanism from C2 to C5. PchB also catalyzes the nonphysiological Claisen rearrangement of chorismate to prephenate in which the pyruvylenol tail is transferred from a C3 ether linkage to a C1-C9 linkage. In Pseudomonas aeruginosa (strain ATCC 15692 / DSM 22644 / CIP 104116 / JCM 14847 / LMG 12228 / 1C / PRS 101 / PAO1), this protein is Isochorismate pyruvate lyase.